The following is a 243-amino-acid chain: UMP-CMP kinase 2 (243 aa).

An ATP-binding site is contributed by 69 to 74; the sequence is GSGKGT. Positions 89–118 are NMP; that stretch reads SAGDLLRSEISTGREKGELILNIIKEGKIV. A ribonucleoside 5'-phosphate contacts are provided by residues arginine 95, 116-118, and 143-146; these read KIV and GFPR. Residue asparagine 150 coordinates CMP. Residues 181–189 form an LID region; it reads GRNQGRVDD. Position 182 (arginine 182) interacts with ATP. Residues arginine 186 and arginine 197 each contribute to the a ribonucleoside 5'-phosphate site.

The protein belongs to the adenylate kinase family. UMP-CMP kinase subfamily. As to quaternary structure, monomer. It depends on Mg(2+) as a cofactor.

The protein resides in the cytoplasm. It localises to the nucleus. It catalyses the reaction UMP + ATP = UDP + ADP. It carries out the reaction CMP + ATP = CDP + ADP. The catalysed reaction is dCMP + ATP = dCDP + ADP. Functionally, catalyzes the phosphorylation of pyrimidine nucleoside monophosphates at the expense of ATP. Plays an important role in de novo pyrimidine nucleotide biosynthesis. Has preference for UMP and CMP as phosphate acceptors. This is UMP-CMP kinase 2 from Oryza sativa subsp. japonica (Rice).